Consider the following 1149-residue polypeptide: Protogenin A (1149 aa).

The signal sequence occupies residues 1 to 23 (MASFKRDLYLFLAVFLSISGVWS). Topologically, residues 24-932 (FSELFFIKEP…GFYHLDQRSM (909 aa)) are extracellular. Ig-like domains are found at residues 27 to 117 (LFFI…ARLT), 122 to 209 (STFT…ATLT), 222 to 309 (PRII…ANIT), and 314 to 399 (PSLV…RLIV). 2 disulfide bridges follow: Cys48/Cys100 and Cys143/Cys192. Asn78 carries N-linked (GlcNAc...) asparagine glycosylation. N-linked (GlcNAc...) asparagine glycosylation occurs at Asn230. Cys243 and Cys291 form a disulfide bridge. N-linked (GlcNAc...) asparagine glycans are attached at residues Asn300 and Asn307. An intrachain disulfide couples Cys335 to Cys382. Fibronectin type-III domains follow at residues 408–502 (APRN…TLED), 504–600 (PLRA…TPKA), 605–704 (VPLA…VRDR), 711–804 (PPHH…TLPE), and 809–905 (APVG…IHTD). N-linked (GlcNAc...) asparagine glycosylation is found at Asn460 and Asn475. Asn617 carries N-linked (GlcNAc...) asparagine glycosylation. Positions 646 to 666 (GQSEAAQAQIPPHHRQHTIGG) are disordered. N-linked (GlcNAc...) asparagine glycosylation is found at Asn720, Asn741, and Asn753. A helical transmembrane segment spans residues 933-953 (AGIAVGVCIALTCIIICILIL). The Cytoplasmic portion of the chain corresponds to 954-1149 (ACRSKTRKSC…EQEMTDLHPV (196 aa)). Residues 1060-1149 (YTETSPENPP…EQEMTDLHPV (90 aa)) form a disordered region. Positions 1061-1073 (TETSPENPPTTLQ) are enriched in polar residues. Positions 1084-1106 (EGSHSSEGSHETSDSGRYSHDDT) are enriched in basic and acidic residues.

The protein belongs to the immunoglobulin superfamily. DCC family. In terms of tissue distribution, expression begins in the posterior region of the embryo and this posterior restriction persists at the 4 s stage. At early somite stages, expressed along the neural tube with lower levels in the lateral and paraxial mesoderm. Expression decreases caudally and rostrally becomes restricted to the ventral part of the brain. Widespread in the spinal cord at 30 hours post-fertilization (hpf) and is also expressed in the lens from this time. At 40 hpf, expression is restricted to the lens.

Its subcellular location is the membrane. Functionally, may play a role in anteroposterior axis elongation. The chain is Protogenin A from Danio rerio (Zebrafish).